Here is a 321-residue protein sequence, read N- to C-terminus: Tet-like dioxygenase 1 (321 aa).

The 101-residue stretch at 198 to 298 (DSYYALNNCL…RIGLVYFAHK (101 aa)) folds into the Fe2OG dioxygenase domain. Residues asparagine 214 and arginine 224 each coordinate 2-oxoglutarate. Fe cation-binding residues include histidine 229 and aspartate 231. A 2-oxoglutarate-binding site is contributed by tyrosine 242. Histidine 279 serves as a coordination point for Fe cation. Residue arginine 289 participates in 2-oxoglutarate binding. Glutamine 310 provides a ligand contact to substrate.

Fe(2+) is required as a cofactor.

It carries out the reaction a 5-methyl-2'-deoxycytidine in DNA + 2-oxoglutarate + O2 = a 5-hydroxymethyl-2'-deoxycytidine in DNA + succinate + CO2. The enzyme catalyses a 5-hydroxymethyl-2'-deoxycytidine in DNA + 2-oxoglutarate + O2 = a 5-formyl-2'-deoxycytidine in DNA + succinate + CO2 + H2O. The catalysed reaction is a 5-formyl-2'-deoxycytidine in DNA + 2-oxoglutarate + O2 = a 5-carboxyl-2'-deoxycytidine in DNA + succinate + CO2 + H(+). Dioxygenase that catalyzes the conversion of the modified genomic base 5-methylcytosine (5mC) into 5-hydroxymethylcytosine (5hmC), and thereby plays a role in active DNA demethylation. Also mediates subsequent conversion of 5hmC into 5-formylcytosine (5fC), and conversion of 5fC to 5-carboxylcytosine (5caC). In Naegleria gruberi (Amoeba), this protein is Tet-like dioxygenase 1.